The primary structure comprises 366 residues: tRNA/tmRNA (uracil-C(5))-methyltransferase (366 aa).

Gln190, Tyr218, Asn223, Glu239, and Asp299 together coordinate S-adenosyl-L-methionine. Cys324 acts as the Nucleophile in catalysis. The active-site Proton acceptor is the Glu358.

It belongs to the class I-like SAM-binding methyltransferase superfamily. RNA M5U methyltransferase family. TrmA subfamily.

The enzyme catalyses uridine(54) in tRNA + S-adenosyl-L-methionine = 5-methyluridine(54) in tRNA + S-adenosyl-L-homocysteine + H(+). The catalysed reaction is uridine(341) in tmRNA + S-adenosyl-L-methionine = 5-methyluridine(341) in tmRNA + S-adenosyl-L-homocysteine + H(+). Functionally, dual-specificity methyltransferase that catalyzes the formation of 5-methyluridine at position 54 (m5U54) in all tRNAs, and that of position 341 (m5U341) in tmRNA (transfer-mRNA). The polypeptide is tRNA/tmRNA (uracil-C(5))-methyltransferase (Edwardsiella ictaluri (strain 93-146)).